The primary structure comprises 506 residues: MIKSILLCFFFLFPLLLTLFKKLLPSKWKLPPGPTGLPIIGNLHQLGRLLHSSFHKLSLEHGPVMLLRFGVVPMVVISSKEAAKQVLKSRDLETCSRPKLVANGLFTRNFKDIAFAQYGEDWREMKKLVGLELFNPKKHKFFRYIREEEGDLLVKKLSKSSQTQTLVDLRKAFFSFTAGIIFRVSFGQNFRECDFIDMDRLEELVQESETNVFSFAFTDFFPTGLGWLVDRISGQHSRIEKAFSKLTKFFQHVIDEELKIGQSQDHSNLVSSMLDMINRSTEYGSFKITSDHLIAMMTDIVLGGVNAGTITMIWTMTELTRHPRVMKKLREEIRATLGPNKERITEEDLEKVEYLKLVIKETFRLHPPGPFLLPRQVMSDIEIQGYHIPKNAHIKISTYAIGRDPKCWTNPEEFNPERFANTSINYKGQHYELLPFGAGRRSCPGMTLGITILELGLLNILYYFDWSLPNGMTIKDIDMEEDGALTIAKKVPLELIPTLPASLCIK.

A helical membrane pass occupies residues 5-25; that stretch reads ILLCFFFLFPLLLTLFKKLLP. C443 contacts heme.

This sequence belongs to the cytochrome P450 family. Heme serves as cofactor.

The protein resides in the membrane. This is Cytochrome P450 71B8 (CYP71B8) from Arabidopsis thaliana (Mouse-ear cress).